A 119-amino-acid chain; its full sequence is Hemerythrin-like protein (119 aa).

Residues histidine 26, histidine 56, glutamate 60, histidine 75, histidine 79, histidine 107, and aspartate 112 each contribute to the Fe cation site.

It belongs to the hemerythrin family.

Oxygen-binding protein. The oxygen-binding site contains two iron atoms. The chain is Hemerythrin-like protein (nfa1) from Naegleria fowleri (Brain eating amoeba).